Consider the following 63-residue polypeptide: uncharacterized protein (63 aa).

This is an uncharacterized protein from Avena byzantina (Oat).